Here is a 97-residue protein sequence, read N- to C-terminus: Co-chaperonin GroES (97 aa).

It belongs to the GroES chaperonin family. Heptamer of 7 subunits arranged in a ring. Interacts with the chaperonin GroEL.

The protein localises to the cytoplasm. In terms of biological role, together with the chaperonin GroEL, plays an essential role in assisting protein folding. The GroEL-GroES system forms a nano-cage that allows encapsulation of the non-native substrate proteins and provides a physical environment optimized to promote and accelerate protein folding. GroES binds to the apical surface of the GroEL ring, thereby capping the opening of the GroEL channel. The chain is Co-chaperonin GroES from Ectopseudomonas mendocina (strain ymp) (Pseudomonas mendocina).